The chain runs to 473 residues: Argininosuccinate lyase (473 aa).

This sequence belongs to the lyase 1 family. Argininosuccinate lyase subfamily.

Its subcellular location is the cytoplasm. The enzyme catalyses 2-(N(omega)-L-arginino)succinate = fumarate + L-arginine. Its pathway is amino-acid biosynthesis; L-arginine biosynthesis; L-arginine from L-ornithine and carbamoyl phosphate: step 3/3. This is Argininosuccinate lyase from Mycobacteroides abscessus (strain ATCC 19977 / DSM 44196 / CCUG 20993 / CIP 104536 / JCM 13569 / NCTC 13031 / TMC 1543 / L948) (Mycobacterium abscessus).